The following is a 650-amino-acid chain: Glycoprotein 105 (650 aa).

The chain crosses the membrane as a helical; Signal-anchor for type II membrane protein span at residues 1 to 32; that stretch reads MATARLGVMRPPRSCALIFLCAFSMATAPTNA. The Virion surface portion of the chain corresponds to 33–650; the sequence is TAHRRAGTVK…RFPHVGIGSY (618 aa). 8 N-linked (GlcNAc...) asparagine; by host glycosylation sites follow: asparagine 52, asparagine 290, asparagine 332, asparagine 338, asparagine 359, asparagine 422, asparagine 516, and asparagine 552.

As to quaternary structure, associates with the gp82-gp105 complex. Post-translationally, N-Glycosylated.

The protein resides in the virion membrane. This chain is Glycoprotein 105 (U96/U97/U98/U99/U100), found in Homo sapiens (Human).